Reading from the N-terminus, the 539-residue chain is Phosphoenolpyruvate carboxykinase (ATP) (539 aa).

3 residues coordinate substrate: R64, Y206, and K212. ATP contacts are provided by residues K212, H231, and G247 to T255. K212 and H231 together coordinate Mn(2+). Residue D268 coordinates Mn(2+). ATP is bound by residues E296, R332, R448–I449, and T454. R332 provides a ligand contact to substrate.

Belongs to the phosphoenolpyruvate carboxykinase (ATP) family. In terms of assembly, monomer. Requires Mn(2+) as cofactor.

It localises to the cytoplasm. The catalysed reaction is oxaloacetate + ATP = phosphoenolpyruvate + ADP + CO2. Its pathway is carbohydrate biosynthesis; gluconeogenesis. Functionally, involved in the gluconeogenesis. Catalyzes the conversion of oxaloacetate (OAA) to phosphoenolpyruvate (PEP) through direct phosphoryl transfer between the nucleoside triphosphate and OAA. The protein is Phosphoenolpyruvate carboxykinase (ATP) of Yersinia pseudotuberculosis serotype IB (strain PB1/+).